The following is a 256-amino-acid chain: Imidazole glycerol phosphate synthase subunit HisF (256 aa).

Active-site residues include Asp-11 and Asp-130.

This sequence belongs to the HisA/HisF family. Heterodimer of HisH and HisF.

The protein localises to the cytoplasm. The enzyme catalyses 5-[(5-phospho-1-deoxy-D-ribulos-1-ylimino)methylamino]-1-(5-phospho-beta-D-ribosyl)imidazole-4-carboxamide + L-glutamine = D-erythro-1-(imidazol-4-yl)glycerol 3-phosphate + 5-amino-1-(5-phospho-beta-D-ribosyl)imidazole-4-carboxamide + L-glutamate + H(+). It functions in the pathway amino-acid biosynthesis; L-histidine biosynthesis; L-histidine from 5-phospho-alpha-D-ribose 1-diphosphate: step 5/9. IGPS catalyzes the conversion of PRFAR and glutamine to IGP, AICAR and glutamate. The HisF subunit catalyzes the cyclization activity that produces IGP and AICAR from PRFAR using the ammonia provided by the HisH subunit. The protein is Imidazole glycerol phosphate synthase subunit HisF of Synechococcus sp. (strain CC9605).